Here is a 358-residue protein sequence, read N- to C-terminus: MTKDEDFKLLKIQTFSLRVNIHCEGCNKKVKKLLQRIEGVCHVKIEAEHQKVTVSGSVDSATLINKLVKAGKHAELWSPNPNQNQPQKPKTNDFIKNVNQKGQKQGSAKSGIEACKPKNGPKGAAFVAEEDGDGSEEEDGDVQFPKPANQQQQQNVVNAKKNSGGAAMNNGNNGVNAASKKVNQKQSNHNQNTQQVMAAMRMRTAGKMSTGVEANEIGALMGLAGFNGATNAVNHPPNGIQQQLQAPPLNNVNGVTNHNLTNSNGGMMMNMNGYNNHHPMNMQSRQMMHQPQQMMYQRSSFVPASSNGYYYNYTPSPYSYYPYYPYASDQYQQQSSHSHATNMSSEEDAGNNNSCNIM.

The HMA domain maps to 12-75 (IQTFSLRVNI…KLVKAGKHAE (64 aa)). A metal cation-binding residues include Cys-23 and Cys-26. 2 disordered regions span residues 100–194 (QKGQ…QNTQ) and 332–358 (QQQS…CNIM). The span at 128 to 141 (AEEDGDGSEEEDGD) shows a compositional bias: acidic residues. Residues 148–181 (ANQQQQQNVVNAKKNSGGAAMNNGNNGVNAASKK) show a composition bias toward low complexity. 2 stretches are compositionally biased toward polar residues: residues 184–194 (QKQSNHNQNTQ) and 339–358 (HATN…CNIM). Cys-355 is subject to Cysteine methyl ester. The S-farnesyl cysteine moiety is linked to residue Cys-355. Positions 356 to 358 (NIM) are cleaved as a propeptide — removed in mature form.

The protein belongs to the HIPP family.

Its function is as follows. Heavy-metal-binding protein. The sequence is that of Heavy metal-associated isoprenylated plant protein 37 from Arabidopsis thaliana (Mouse-ear cress).